The primary structure comprises 216 residues: Protein Syd (216 aa).

The protein belongs to the Syd family.

The protein resides in the cell inner membrane. Functionally, interacts with the SecY protein in vivo. May bind preferentially to an uncomplexed state of SecY, thus functioning either as a chelating agent for excess SecY in the cell or as a regulatory factor that negatively controls the translocase function. The sequence is that of Protein Syd from Shewanella frigidimarina (strain NCIMB 400).